Here is a 2506-residue protein sequence, read N- to C-terminus: Zinc finger protein 462 (2506 aa).

3 C2H2-type zinc fingers span residues 4 to 27 (LQCD…QDVH), 108 to 131 (FQCK…RKVH), and 162 to 185 (FSCQ…KMYH). Lys20 participates in a covalent cross-link: Glycyl lysine isopeptide (Lys-Gly) (interchain with G-Cter in SUMO1); alternate. Lys20 participates in a covalent cross-link: Glycyl lysine isopeptide (Lys-Gly) (interchain with G-Cter in SUMO2); alternate. Residues 215 to 241 (PCKELPAEVVERSILESMVKPLTKSRG) are interaction with PBX1. Glycyl lysine isopeptide (Lys-Gly) (interchain with G-Cter in SUMO2) cross-links involve residues Lys234 and Lys271. The disordered stretch occupies residues 280 to 299 (QEGTNLPDVPNKSAPSPTSN). Ser292 and Ser309 each carry an O-linked (GlcNAc6P) serine glycan. Residues Lys337, Lys347, and Lys349 each participate in a glycyl lysine isopeptide (Lys-Gly) (interchain with G-Cter in SUMO2) cross-link. A disordered region spans residues 337 to 356 (KFSPMSYPQMKPKSPHNSGL). Residues Ser350 and Ser354 each carry the phosphoserine modification. Residue Lys428 forms a Glycyl lysine isopeptide (Lys-Gly) (interchain with G-Cter in SUMO2) linkage. 2 C2H2-type zinc fingers span residues 439–462 (FQCP…ENIH) and 470–492 (YKCD…KQCH). Lys484 participates in a covalent cross-link: Glycyl lysine isopeptide (Lys-Gly) (interchain with G-Cter in SUMO2). The interval 535 to 596 (DPLQQQQPPQ…QPQPPTQAAP (62 aa)) is disordered. Residues 542 to 593 (PPQPPPPPPPPPPSQPQPLQQPQPPQLQPPHQVPPQPQTQPPPTQQPQPPTQ) are compositionally biased toward pro residues. Residues 600–623 (YKCTMCNYSTTTLKGLRVHQQHKH) form a C2H2-type 6 zinc finger. Glycyl lysine isopeptide (Lys-Gly) (interchain with G-Cter in SUMO2) cross-links involve residues Lys631, Lys657, and Lys668. Positions 636 to 661 (PSSLPLENETDSHPSSSNTVKKSQTS) are disordered. A compositionally biased stretch (polar residues) spans 648–661 (HPSSSNTVKKSQTS). Residue Ser688 is modified to Phosphoserine. Glycyl lysine isopeptide (Lys-Gly) (interchain with G-Cter in SUMO2) cross-links involve residues Lys706 and Asp849. C2H2-type zinc fingers lie at residues 843-866 (YYCK…QRMH), 886-908 (YRCL…YGEH), and 925-948 (YRCR…QRMH). Residue Lys986 forms a Glycyl lysine isopeptide (Lys-Gly) (interchain with G-Cter in SUMO2) linkage. The C2H2-type 10 zinc finger occupies 1030 to 1053 (YDCDVCSFASPNMHSVLVHYQKKH). A Phosphoserine modification is found at Ser1090. A Glycyl lysine isopeptide (Lys-Gly) (interchain with G-Cter in SUMO2) cross-link involves residue Lys1135. Residues 1157–1186 (MRGVEGPQGSPRPPAPIQQLNRSSSERDGP) are disordered. Ser1166 is subject to Phosphoserine. Glycyl lysine isopeptide (Lys-Gly) (interchain with G-Cter in SUMO2) cross-links involve residues Lys1206, Lys1214, Lys1220, and Lys1243. 2 C2H2-type zinc fingers span residues 1265-1288 (LKCR…KKDH) and 1470-1493 (YQCT…GKKH). Residue Lys1499 forms a Glycyl lysine isopeptide (Lys-Gly) (interchain with G-Cter in SUMO2) linkage. The segment at 1515-1538 (YKCRHCPYINTRIHGVLTHYQKRH) adopts a C2H2-type 13 zinc-finger fold. Glycyl lysine isopeptide (Lys-Gly) (interchain with G-Cter in SUMO2) cross-links involve residues Lys1571 and Lys1591. 3 consecutive C2H2-type zinc fingers follow at residues 1577–1600 (YRCK…EKYH), 1660–1683 (FRCQ…RIKH), and 1697–1720 (FKCA…QKRH). Glycyl lysine isopeptide (Lys-Gly) (interchain with G-Cter in SUMO2) cross-links involve residues Lys1698 and Lys1780. The segment at 1892–1914 (YQCKHCDSKLQSTAELTSHLNIH) adopts a C2H2-type 17 zinc-finger fold. Lys1946 participates in a covalent cross-link: Glycyl lysine isopeptide (Lys-Gly) (interchain with G-Cter in SUMO2). The C2H2-type 18; degenerate zinc-finger motif lies at 1968-1992 (YKCKFCVEVHPTLRAICNHLRKHVQ). Residue Lys2004 is modified to N6-methyllysine. C2H2-type zinc fingers lie at residues 2025 to 2048 (YSCQ…QTHH), 2054 to 2077 (FRCK…LKAH), and 2083 to 2106 (YKCS…LKVH). A Glycyl lysine isopeptide (Lys-Gly) (interchain with G-Cter in SUMO2) cross-link involves residue Lys2104. A disordered region spans residues 2122–2152 (SSHSHHSSQKATPAEEVEDSNDSSYSEPPDV). Polar residues predominate over residues 2143-2152 (DSSYSEPPDV). Residues Ser2172 and Ser2177 each carry the phosphoserine modification. 3 consecutive C2H2-type zinc fingers follow at residues 2191–2214 (LHCE…RDKH), 2220–2243 (FKCK…EAGH), and 2254–2276 (LRCP…IVLH). A Glycyl lysine isopeptide (Lys-Gly) (interchain with G-Cter in SUMO2) cross-link involves residue Lys2293. C2H2-type zinc fingers lie at residues 2300–2322 (FRCD…IEKH) and 2328–2351 (YKCQ…RDEH). Residues 2371–2396 (MKEKMESSSSDDEDKEEEMNSKAEDR) are disordered. The C2H2-type 27 zinc finger occupies 2414–2436 (FPCEFCGRAFSQGSEWERHVLRH). Residues Lys2444 and Lys2504 each participate in a glycyl lysine isopeptide (Lys-Gly) (interchain with G-Cter in SUMO2) cross-link.

As to quaternary structure, interacts with PBX1; this interaction prevents PBX1-HOXA9 heterodimer from forming and binding to DNA. In terms of processing, O-GlcNAcylated with O-GlcNAc-6-phosphate.

The protein localises to the nucleus. Functionally, zinc finger nuclear factor involved in transcription by regulating chromatin structure and organization. Involved in the pluripotency and differentiation of embryonic stem cells by regulating SOX2, POU5F1/OCT4, and NANOG. By binding PBX1, prevents the heterodimerization of PBX1 and HOXA9 and their binding to DNA. Regulates neuronal development and neural cell differentiation. The sequence is that of Zinc finger protein 462 from Homo sapiens (Human).